The chain runs to 983 residues: 3',5'-cyclic-AMP phosphodiesterase, isoforms N/G (983 aa).

Disordered regions lie at residues 31–333 (MPEG…SAGL), 349–370 (SDSDFEMSPKSMSRNSSIASES), 400–429 (VPASNKSRRPNQSSSASRSGNPPGAPLSQG), and 528–566 (SAGQYARSRSPRGPPMSQISGVKRPLSHTNSFTGERLPT). A compositionally biased stretch (basic and acidic residues) spans 35–50 (GEDHRGDLNQKGENNN). The span at 51–60 (RPRPSISLAN) shows a compositional bias: polar residues. The segment covering 84-97 (SVGGGDSDGGGEAI) has biased composition (gly residues). Low complexity-rich tracts occupy residues 112–121 (LSTTTSNSSS) and 145–167 (QLQQHSSSLSNGNRGNRGLSQRS). Residues 174–199 (AEGEEFDVDPMDEDDEDQTYDRETEE) are compositionally biased toward acidic residues. Composition is skewed to low complexity over residues 219 to 234 (SSLFSRSDSSATTTSS) and 248 to 261 (AASILSSSMCSDLM). Composition is skewed to polar residues over residues 268-287 (STATEYSVKSVTTGNTSQRR), 358-368 (KSMSRNSSIAS), and 401-419 (PASNKSRRPNQSSSASRSG). Residues 569-898 (VETPRENELG…DYYQSMIPPS (330 aa)) enclose the PDEase domain. The active-site Proton donor is histidine 645. Position 645 to 649 (645 to 649 (HNSLH)) interacts with 3',5'-cyclic AMP. The a divalent metal cation site is built by histidine 649, histidine 685, aspartate 686, and aspartate 803. 3',5'-cyclic AMP-binding residues include aspartate 686, aspartate 803, and glutamine 854. Residues 920 to 937 (EESDQENLAELEEGDESG) are compositionally biased toward acidic residues. The interval 920-983 (EESDQENLAE…CQNQPQHGGM (64 aa)) is disordered. Residues 938–955 (GESTTTGTTGTTAASALS) are compositionally biased toward low complexity. The segment covering 956 to 967 (GAGGGGGGGGGM) has biased composition (gly residues). Polar residues predominate over residues 973–983 (GCQNQPQHGGM).

The protein belongs to the cyclic nucleotide phosphodiesterase family. PDE4 subfamily. As to quaternary structure, monomer. It depends on a divalent metal cation as a cofactor.

It carries out the reaction 3',5'-cyclic AMP + H2O = AMP + H(+). It functions in the pathway purine metabolism; 3',5'-cyclic AMP degradation; AMP from 3',5'-cyclic AMP: step 1/1. Functionally, hydrolyzes the second messenger cAMP, which is a key regulator of many important physiological processes. Vital for female fertility. Required for learning/memory. The sequence is that of 3',5'-cyclic-AMP phosphodiesterase, isoforms N/G from Drosophila melanogaster (Fruit fly).